Consider the following 218-residue polypeptide: Orotate phosphoribosyltransferase (218 aa).

Lys26 contacts 5-phospho-alpha-D-ribose 1-diphosphate. 34 to 35 (FF) is a binding site for orotate. 5-phospho-alpha-D-ribose 1-diphosphate-binding positions include 72–73 (YK), Arg99, Lys100, Lys103, His105, and 124–132 (DDVITAGTA). Orotate-binding residues include Thr128 and Arg156.

It belongs to the purine/pyrimidine phosphoribosyltransferase family. PyrE subfamily. In terms of assembly, homodimer. The cofactor is Mg(2+).

The enzyme catalyses orotidine 5'-phosphate + diphosphate = orotate + 5-phospho-alpha-D-ribose 1-diphosphate. Its pathway is pyrimidine metabolism; UMP biosynthesis via de novo pathway; UMP from orotate: step 1/2. Functionally, catalyzes the transfer of a ribosyl phosphate group from 5-phosphoribose 1-diphosphate to orotate, leading to the formation of orotidine monophosphate (OMP). The chain is Orotate phosphoribosyltransferase from Hamiltonella defensa subsp. Acyrthosiphon pisum (strain 5AT).